A 514-amino-acid chain; its full sequence is Coiled-coil domain-containing protein 174 (514 aa).

2 disordered regions span residues 42–83 (AKPK…DQSR) and 137–162 (TLEK…PDEE). The span at 63-83 (KRAEKDIEQKAEEDQTLDQSR) shows a compositional bias: basic and acidic residues. A coiled-coil region spans residues 66–98 (EKDIEQKAEEDQTLDQSRKKLEEKAKLYEKMTK). The segment covering 141 to 162 (ETDDEEIEPEMEIPPPEDPDEE) has biased composition (acidic residues). 2 coiled-coil regions span residues 203–227 (LLSE…ALRK) and 266–321 (LDML…LENG). 2 disordered regions span residues 270–291 (REQT…KAAL) and 306–490 (LREE…PSAH). Composition is skewed to basic and acidic residues over residues 335–354 (EVPR…RDTK) and 376–388 (KKQE…RDPE). The segment covering 405–418 (YSSQNLNSPETSPG) has biased composition (polar residues). Over residues 420–429 (TEPEISENQK) the composition is skewed to basic and acidic residues.

It localises to the nucleus. In terms of biological role, probably involved in neuronal development. This Gallus gallus (Chicken) protein is Coiled-coil domain-containing protein 174 (CCDC174).